A 962-amino-acid chain; its full sequence is Glycine dehydrogenase (decarboxylating) (962 aa).

Lys-709 is subject to N6-(pyridoxal phosphate)lysine.

This sequence belongs to the GcvP family. The glycine cleavage system is composed of four proteins: P, T, L and H. Requires pyridoxal 5'-phosphate as cofactor.

It catalyses the reaction N(6)-[(R)-lipoyl]-L-lysyl-[glycine-cleavage complex H protein] + glycine + H(+) = N(6)-[(R)-S(8)-aminomethyldihydrolipoyl]-L-lysyl-[glycine-cleavage complex H protein] + CO2. Functionally, the glycine cleavage system catalyzes the degradation of glycine. The P protein binds the alpha-amino group of glycine through its pyridoxal phosphate cofactor; CO(2) is released and the remaining methylamine moiety is then transferred to the lipoamide cofactor of the H protein. The sequence is that of Glycine dehydrogenase (decarboxylating) from Shewanella sp. (strain ANA-3).